The following is a 426-amino-acid chain: 10-deoxymethynolide desosaminyltransferase (426 aa).

The protein belongs to the glycosyltransferase 28 family. Forms a complex with DesVIII.

It carries out the reaction 10-deoxymethynolide + dTDP-alpha-D-desosamine = 10-deoxymethymycin + dTDP + H(+). Its pathway is antibiotic biosynthesis. In terms of biological role, involved in the biosynthesis of the macrolide antibiotics methymycin, neomethymycin, narbomycin, and pikromycin. Catalyzes the attachment of dTDP-D-desosamine onto 12- and 14-membered macrolactone rings 10-deoxymethynolide and narbonolide to produce 10-deoxymethymycin (YC-17) and narbomycin. DesVII is unique among glycosyltransferases in that it requires an additional protein component, DesVIII, for its activity. DesVII can recognize and process not only cyclic substrates of different ring size, but also a variety of linear substrates albeit with reduced, but measurable activities. Both L-sugars and D-sugars are recognized as substrates and variant substitutions at C-3 and C-4 are tolerated, but deoxygenation at C-6 is required. In Streptomyces venezuelae, this protein is 10-deoxymethynolide desosaminyltransferase.